The sequence spans 122 residues: Putative iron-sulfur cluster insertion protein ErpA (122 aa).

Residues Cys-50, Cys-114, and Cys-116 each contribute to the iron-sulfur cluster site.

It belongs to the HesB/IscA family. In terms of assembly, homodimer. It depends on iron-sulfur cluster as a cofactor.

In terms of biological role, required for insertion of 4Fe-4S clusters. The chain is Putative iron-sulfur cluster insertion protein ErpA from Cupriavidus necator (strain ATCC 17699 / DSM 428 / KCTC 22496 / NCIMB 10442 / H16 / Stanier 337) (Ralstonia eutropha).